We begin with the raw amino-acid sequence, 374 residues long: MAENKHIAALNNNKPALSEDQAVQLIESLYGVKVLNIKPLPSYDDQNFYIKSCSEDPNGCCEYVMKITNSEDSRYGELLEAQTSVMVFLCSNGVPAQKPVFTKNGQSLSLETIDYGSTIQKQAVRLLTYLPGTPLARVVATPEILFDIGKMAANIDKMLAENFLHPNKTCFERGQFIWNLSNTSLLRKYAHAVKETELQKIIEDVITQYETFVLPNLNCFRKCINHGDLNDHNILVEKTSSPGSIQEQYKVSGILDFSDMSFGYYIFELAITIMYMMIESNDPLHAGGYVLAGFQSVIPLTDEEKDALFFLVNCRFSQSLVMARYSVQLCPENEEYLMITAKTGWKHLQTLHDMGKEAVEKIWFETADSYVATH.

D228 serves as the catalytic Proton acceptor.

The protein belongs to the aminoglycoside phosphotransferase family.

It is found in the cytoplasm. It catalyses the reaction (5R)-5-hydroxy-L-lysine + GTP = (5R)-5-phosphooxy-L-lysine + GDP + H(+). Its function is as follows. Catalyzes the GTP-dependent phosphorylation of 5-hydroxy-L-lysine. The protein is Hydroxylysine kinase (hykk) of Xenopus laevis (African clawed frog).